The sequence spans 234 residues: tRNA1(Val) (adenine(37)-N6)-methyltransferase (234 aa).

Belongs to the methyltransferase superfamily. tRNA (adenine-N(6)-)-methyltransferase family.

It is found in the cytoplasm. The catalysed reaction is adenosine(37) in tRNA1(Val) + S-adenosyl-L-methionine = N(6)-methyladenosine(37) in tRNA1(Val) + S-adenosyl-L-homocysteine + H(+). In terms of biological role, specifically methylates the adenine in position 37 of tRNA(1)(Val) (anticodon cmo5UAC). In Pedobacter heparinus (strain ATCC 13125 / DSM 2366 / CIP 104194 / JCM 7457 / NBRC 12017 / NCIMB 9290 / NRRL B-14731 / HIM 762-3), this protein is tRNA1(Val) (adenine(37)-N6)-methyltransferase.